A 949-amino-acid polypeptide reads, in one-letter code: Isoleucine--tRNA ligase (949 aa).

Residues 58-68 (PYANGDIHIGH) carry the 'HIGH' region motif. Glutamate 567 is an L-isoleucyl-5'-AMP binding site. Residues 608-612 (KMSKS) carry the 'KMSKS' region motif. Lysine 611 provides a ligand contact to ATP. Positions 912, 915, 932, and 935 each coordinate Zn(2+).

Belongs to the class-I aminoacyl-tRNA synthetase family. IleS type 1 subfamily. As to quaternary structure, monomer. Zn(2+) is required as a cofactor.

The protein localises to the cytoplasm. It carries out the reaction tRNA(Ile) + L-isoleucine + ATP = L-isoleucyl-tRNA(Ile) + AMP + diphosphate. Its function is as follows. Catalyzes the attachment of isoleucine to tRNA(Ile). As IleRS can inadvertently accommodate and process structurally similar amino acids such as valine, to avoid such errors it has two additional distinct tRNA(Ile)-dependent editing activities. One activity is designated as 'pretransfer' editing and involves the hydrolysis of activated Val-AMP. The other activity is designated 'posttransfer' editing and involves deacylation of mischarged Val-tRNA(Ile). This chain is Isoleucine--tRNA ligase, found in Vibrio cholerae serotype O1 (strain ATCC 39315 / El Tor Inaba N16961).